An 87-amino-acid polypeptide reads, in one-letter code: Antitoxin epsilon (87 aa).

The protein belongs to the epsilon antitoxin family. As to quaternary structure, in the presence of the zeta toxin, forms an inactive PezA(2)PezT(2) heterotetramer.

In terms of biological role, antitoxin component of a type II toxin-antitoxin (TA) system. Neutralizes the toxic effect of cognate zeta toxin. Part of a postsegregational killing (PSK) system involved in the killing of plasmid-free cells. Continuous synthesis of the epsilon antitoxin is required to counteract the zeta toxin. The polypeptide is Antitoxin epsilon (Lactococcus lactis subsp. lactis (Streptococcus lactis)).